We begin with the raw amino-acid sequence, 217 residues long: Small ribosomal subunit protein uS3 (217 aa).

The KH type-2 domain maps to I38–K106.

This sequence belongs to the universal ribosomal protein uS3 family. Part of the 30S ribosomal subunit. Forms a tight complex with proteins S10 and S14.

Its function is as follows. Binds the lower part of the 30S subunit head. Binds mRNA in the 70S ribosome, positioning it for translation. The sequence is that of Small ribosomal subunit protein uS3 (rpsC) from Staphylococcus aureus (strain COL).